Here is an 88-residue protein sequence, read N- to C-terminus: Small ribosomal subunit protein uS15c (88 aa).

It belongs to the universal ribosomal protein uS15 family. Part of the 30S ribosomal subunit.

It is found in the plastid. It localises to the chloroplast. This is Small ribosomal subunit protein uS15c (rps15) from Nasturtium officinale (Watercress).